A 264-amino-acid polypeptide reads, in one-letter code: Protein-lysine methyltransferase METTL21C (264 aa).

Positions 1–10 (MDVCLSSAQQ) are enriched in polar residues. The segment at 1 to 46 (MDVCLSSAQQPGRRGEGLSSPGGWLEAEKKGAPQKDSTGGVLEESN) is disordered. Residues Trp92, 120–122 (GAG), Asp141, Trp172, and Ser193 each bind S-adenosyl-L-methionine.

It belongs to the methyltransferase superfamily. METTL21 family. As to quaternary structure, interacts with members of the heat shock protein 70 families; these proteins may possibly be methylation substrates for the enzyme.

It localises to the nucleus. The protein localises to the cytoplasm. It carries out the reaction L-lysyl-[protein] + S-adenosyl-L-methionine = N(6)-methyl-L-lysyl-[protein] + S-adenosyl-L-homocysteine + H(+). The enzyme catalyses N(6)-methyl-L-lysyl-[protein] + S-adenosyl-L-methionine = N(6),N(6)-dimethyl-L-lysyl-[protein] + S-adenosyl-L-homocysteine + H(+). It catalyses the reaction N(6),N(6)-dimethyl-L-lysyl-[protein] + S-adenosyl-L-methionine = N(6),N(6),N(6)-trimethyl-L-lysyl-[protein] + S-adenosyl-L-homocysteine + H(+). In terms of biological role, protein-lysine N-methyltransferase using S-adenosyl-L-methionine as methyl donor. Mono-di and trimethylates 'Lys-943' of AARS1. The chain is Protein-lysine methyltransferase METTL21C from Homo sapiens (Human).